A 263-amino-acid chain; its full sequence is Acetylglutamate kinase (263 aa).

Substrate is bound by residues 48–49, arginine 70, and asparagine 162; that span reads GG.

It belongs to the acetylglutamate kinase family. ArgB subfamily.

The protein localises to the cytoplasm. It carries out the reaction N-acetyl-L-glutamate + ATP = N-acetyl-L-glutamyl 5-phosphate + ADP. The protein operates within amino-acid biosynthesis; L-arginine biosynthesis; N(2)-acetyl-L-ornithine from L-glutamate: step 2/4. Functionally, catalyzes the ATP-dependent phosphorylation of N-acetyl-L-glutamate. The sequence is that of Acetylglutamate kinase from Vibrio campbellii (strain ATCC BAA-1116).